A 274-amino-acid chain; its full sequence is Penicillin-insensitive murein endopeptidase (274 aa).

Residues 1 to 19 form the signal peptide; sequence MNKTAIALLALLASSASLA. Intrachain disulfides connect C44–C265, C187–C235, and C216–C223. Residues H110, H113, D120, D147, H150, and H211 each coordinate Zn(2+).

The protein belongs to the peptidase M74 family. In terms of assembly, dimer. Requires Zn(2+) as cofactor.

It localises to the periplasm. Murein endopeptidase that cleaves the D-alanyl-meso-2,6-diamino-pimelyl amide bond that connects peptidoglycan strands. Likely plays a role in the removal of murein from the sacculus. This is Penicillin-insensitive murein endopeptidase from Shigella sonnei (strain Ss046).